Here is a 195-residue protein sequence, read N- to C-terminus: Protein Fer3 (195 aa).

Disordered stretches follow at residues 1 to 24 and 56 to 82; these read MQHP…LWGQ and PLVP…RRRV. Over residues 63 to 75 the composition is skewed to low complexity; that stretch reads STNGRANGSSSSS. The bHLH domain maps to 86-138; that stretch reads AQRRAANIRERRRMFNLNEAFDKLRRKVPTFAYEKRLSRIETLRLAITYIGFM. The segment at 145–175 is disordered; that stretch reads TPSNSHKSRSDVYGSMNGHHQAPPPAIHPHH.

Its subcellular location is the nucleus. Transcription factor that binds to the E-box and functions as inhibitor of transcription. DNA binding requires dimerization with an E protein. Inhibits transcription activation by ASCL1/MASH1 by sequestering E proteins. This is Protein Fer3 (fer3) from Drosophila melanogaster (Fruit fly).